The following is a 125-amino-acid chain: Mitochondrial import inner membrane translocase subunit TIM16 (125 aa).

The J-like stretch occupies residues 58-110; it reads EAQQILNVSKLSPEEVQKNYEHLFKVNDKSVGGSFYLQSKVVRAKERLDEELR. The residue at position 69 (Ser69) is a Phosphoserine.

The protein belongs to the TIM16/PAM16 family. Probable component of the PAM complex at least composed of a mitochondrial HSP70 protein, GRPEL1 or GRPEL2, TIMM44, TIMM16/PAM16 and TIMM14/DNAJC19. Interacts with DNAJC19. Directly interacts with DNAJC15; this interaction counteracts DNAJC15-dependent stimulation of HSPA9 ATPase activity. Associates with the TIM23 complex. In terms of tissue distribution, expressed in trabecular bone and cartilage and by differentiated chondrocytes localized in the hypertrophic zone and by osteoblasts at early developmental stages.

Its subcellular location is the mitochondrion inner membrane. In terms of biological role, regulates ATP-dependent protein translocation into the mitochondrial matrix. Inhibits DNAJC19 stimulation of HSPA9/Mortalin ATPase activity. This is Mitochondrial import inner membrane translocase subunit TIM16 from Mus musculus (Mouse).